We begin with the raw amino-acid sequence, 254 residues long: Hydroxyacylglutathione hydrolase (254 aa).

Residues His-54, His-56, Asp-58, His-59, His-111, Asp-130, and His-168 each contribute to the Zn(2+) site.

This sequence belongs to the metallo-beta-lactamase superfamily. Glyoxalase II family. As to quaternary structure, monomer. Zn(2+) serves as cofactor.

It catalyses the reaction an S-(2-hydroxyacyl)glutathione + H2O = a 2-hydroxy carboxylate + glutathione + H(+). It participates in secondary metabolite metabolism; methylglyoxal degradation; (R)-lactate from methylglyoxal: step 2/2. Its function is as follows. Thiolesterase that catalyzes the hydrolysis of S-D-lactoyl-glutathione to form glutathione and D-lactic acid. The chain is Hydroxyacylglutathione hydrolase from Legionella pneumophila (strain Corby).